The primary structure comprises 423 residues: tRNA(Ile)-lysidine synthase (423 aa).

Ser-18–Ser-23 is an ATP binding site.

This sequence belongs to the tRNA(Ile)-lysidine synthase family.

Its subcellular location is the cytoplasm. It catalyses the reaction cytidine(34) in tRNA(Ile2) + L-lysine + ATP = lysidine(34) in tRNA(Ile2) + AMP + diphosphate + H(+). Ligates lysine onto the cytidine present at position 34 of the AUA codon-specific tRNA(Ile) that contains the anticodon CAU, in an ATP-dependent manner. Cytidine is converted to lysidine, thus changing the amino acid specificity of the tRNA from methionine to isoleucine. The polypeptide is tRNA(Ile)-lysidine synthase (Aromatoleum aromaticum (strain DSM 19018 / LMG 30748 / EbN1) (Azoarcus sp. (strain EbN1))).